A 491-amino-acid polypeptide reads, in one-letter code: MNTQDLAKLRSIVPEMRRVRHIHFVGIGGAGMGGIAEVLANEGYQISGSDLAPNPVTQQLSQLGATIYFNHRPENVRDASVVVVSSAISADNPEIVAAHEARIPVIRRAEMLAELMRFRHGIAIAGTHGKTTTTAMVSSIYAEAGLDPTFVNGGLVKAAGVHARLGHSRYLIAEADESDASFLHLQPMVAIVTNIEADHMDTYHGDFENLKQTFINFLHNLPFYGRAVMCVDDPVIRELLPRVGRQITTYGFSDDADVRVEDYRQLGAQGHFRLVRQDKEILQVTLNAPGRHNALNAAAAVAVATEEGIDDQAILRALESFQGTGRRFDFLGEFPLAEVNGKPGSAMLIDDYGHHPTEVDATIKAARAGWPDKNLVMLFQPHRYTRTRDLYDDFANVLTQVDALLMLDVYPAGEAPIPGADSRSLCRTIRGRGKVDPILVSDPAQAAEMLASVLTGNDLVLVQGAGNIGKIARHLAEIKLAPQKTEEERHG.

126–132 (GTHGKTT) is a binding site for ATP.

It belongs to the MurCDEF family.

It is found in the cytoplasm. It catalyses the reaction UDP-N-acetyl-alpha-D-muramate + L-alanine + ATP = UDP-N-acetyl-alpha-D-muramoyl-L-alanine + ADP + phosphate + H(+). Its pathway is cell wall biogenesis; peptidoglycan biosynthesis. Functionally, cell wall formation. The polypeptide is UDP-N-acetylmuramate--L-alanine ligase (Klebsiella pneumoniae (strain 342)).